Reading from the N-terminus, the 339-residue chain is Phenylalanine--tRNA ligase alpha subunit (339 aa).

Glutamate 250 contributes to the Mg(2+) binding site.

The protein belongs to the class-II aminoacyl-tRNA synthetase family. Phe-tRNA synthetase alpha subunit type 1 subfamily. As to quaternary structure, tetramer of two alpha and two beta subunits. The cofactor is Mg(2+).

The protein localises to the cytoplasm. It catalyses the reaction tRNA(Phe) + L-phenylalanine + ATP = L-phenylalanyl-tRNA(Phe) + AMP + diphosphate + H(+). This is Phenylalanine--tRNA ligase alpha subunit from Bacteroides fragilis (strain ATCC 25285 / DSM 2151 / CCUG 4856 / JCM 11019 / LMG 10263 / NCTC 9343 / Onslow / VPI 2553 / EN-2).